The primary structure comprises 302 residues: Nucleotide-binding protein Rsph17025_2562 (302 aa).

ATP is bound at residue glycine 15–threonine 22. Aspartate 62–asparagine 65 is a binding site for GTP.

Belongs to the RapZ-like family.

In terms of biological role, displays ATPase and GTPase activities. In Cereibacter sphaeroides (strain ATCC 17025 / ATH 2.4.3) (Rhodobacter sphaeroides), this protein is Nucleotide-binding protein Rsph17025_2562.